A 131-amino-acid chain; its full sequence is Jacalin-related lectin 15 (131 aa).

The Jacalin-type lectin domain maps to 1–126 (MSTPSGSNPL…LTSLGAYFAP (126 aa)).

Belongs to the jacalin lectin family. Expressed in the vascular and surrounding tissues in cotyledons. Detected in root apical meristems.

This is Jacalin-related lectin 15 (JAL15) from Arabidopsis thaliana (Mouse-ear cress).